Consider the following 340-residue polypeptide: DNA-directed RNA polymerase subunit alpha (340 aa).

An alpha N-terminal domain (alpha-NTD) region spans residues 1–233 (MYRNWRDLIS…EQLSIFINFD (233 aa)). Residues 251-340 (VNENLYRSVD…RIRGERKDEE (90 aa)) form an alpha C-terminal domain (alpha-CTD) region.

It belongs to the RNA polymerase alpha chain family. Homodimer. The RNAP catalytic core consists of 2 alpha, 1 beta, 1 beta' and 1 omega subunit. When a sigma factor is associated with the core the holoenzyme is formed, which can initiate transcription.

The catalysed reaction is RNA(n) + a ribonucleoside 5'-triphosphate = RNA(n+1) + diphosphate. Its function is as follows. DNA-dependent RNA polymerase catalyzes the transcription of DNA into RNA using the four ribonucleoside triphosphates as substrates. This is DNA-directed RNA polymerase subunit alpha from Geobacter metallireducens (strain ATCC 53774 / DSM 7210 / GS-15).